The primary structure comprises 428 residues: Tol-Pal system protein TolB (428 aa).

The signal sequence occupies residues 1–23 (MRRLYQTVCTLALLLVGLQAAHA).

It belongs to the TolB family. In terms of assembly, the Tol-Pal system is composed of five core proteins: the inner membrane proteins TolA, TolQ and TolR, the periplasmic protein TolB and the outer membrane protein Pal. They form a network linking the inner and outer membranes and the peptidoglycan layer.

Its subcellular location is the periplasm. In terms of biological role, part of the Tol-Pal system, which plays a role in outer membrane invagination during cell division and is important for maintaining outer membrane integrity. The polypeptide is Tol-Pal system protein TolB (Alkalilimnicola ehrlichii (strain ATCC BAA-1101 / DSM 17681 / MLHE-1)).